The sequence spans 550 residues: Arginine--tRNA ligase (550 aa).

The short motif at 130–140 (ANPTGPIHIGG) is the 'HIGH' region element.

Belongs to the class-I aminoacyl-tRNA synthetase family. In terms of assembly, monomer.

Its subcellular location is the cytoplasm. The catalysed reaction is tRNA(Arg) + L-arginine + ATP = L-arginyl-tRNA(Arg) + AMP + diphosphate. This chain is Arginine--tRNA ligase, found in Mycobacterium marinum (strain ATCC BAA-535 / M).